The sequence spans 290 residues: Chitinase 10 (290 aa).

A signal peptide spans 1–28 (MAKPTPAPRATPFLLAAVLSIVVVAASG). Cystine bridges form between cysteine 70-cysteine 132 and cysteine 144-cysteine 153. Glutamate 114 functions as the Proton donor in the catalytic mechanism. N-linked (GlcNAc...) asparagine glycosylation is found at asparagine 193 and asparagine 234. Cysteine 252 and cysteine 284 are oxidised to a cystine.

It belongs to the glycosyl hydrolase 19 family. Chitinase class I subfamily. Expressed at low levels in roots, leaves and meristems.

It catalyses the reaction Random endo-hydrolysis of N-acetyl-beta-D-glucosaminide (1-&gt;4)-beta-linkages in chitin and chitodextrins.. The protein is Chitinase 10 (Cht10) of Oryza sativa subsp. japonica (Rice).